The sequence spans 1330 residues: Nephrocystin-3 (1330 aa).

The N-myristoyl glycine moiety is linked to residue G2. A coiled-coil region spans residues 83 to 207; it reads ELEYAAAEYE…QRLQAQGIQV (125 aa). TPR repeat units lie at residues 471 to 504, 885 to 918, 920 to 942, 943 to 976, 985 to 1018, 1027 to 1060, 1093 to 1126, 1135 to 1168, 1177 to 1210, 1219 to 1252, and 1261 to 1294; these read IPEE…AHEL, CLLN…KSAM, TEYF…MSCL, ADLY…RETA, AQSL…SENA, AREL…HQKA, ARTL…RERV, AQSL…RRRA, AYTV…RQKS, ATAL…YEDS, and GETL…KEAE. Residues 1296-1330 form a disordered region; that stretch reads SLLGGKAPSRHSSSGDTFSLKTAHSPNVFLQQGQR. A compositionally biased stretch (polar residues) spans 1305–1330; it reads RHSSSGDTFSLKTAHSPNVFLQQGQR.

Interacts with NPHP1 and INVS/NPHP2. Interacts (when myristoylated) with UNC119 and UNC119B; interaction is required for localization to cilium. Interacts with CEP164. Component of a complex containing at least ANKS6, INVS, NEK8 and NPHP3. ANKS6 may organize complex assembly by linking INVS and NPHP3 to NEK8 and INVS may target the complex to the proximal ciliary axoneme. In terms of tissue distribution, widely expressed at low level. Expressed in heart, placenta, liver, skeletal muscle, kidney and pancreas. Expressed at very low level in brain and lung.

The protein localises to the cell projection. The protein resides in the cilium. Required for normal ciliary development and function. Inhibits disheveled-1-induced canonical Wnt-signaling activity and may also play a role in the control of non-canonical Wnt signaling which regulates planar cell polarity. Probably acts as a molecular switch between different Wnt signaling pathways. Required for proper convergent extension cell movements. In Homo sapiens (Human), this protein is Nephrocystin-3 (NPHP3).